Reading from the N-terminus, the 177-residue chain is Large ribosomal subunit protein uL6 (177 aa).

This sequence belongs to the universal ribosomal protein uL6 family. In terms of assembly, part of the 50S ribosomal subunit.

In terms of biological role, this protein binds to the 23S rRNA, and is important in its secondary structure. It is located near the subunit interface in the base of the L7/L12 stalk, and near the tRNA binding site of the peptidyltransferase center. This is Large ribosomal subunit protein uL6 from Aeromonas salmonicida (strain A449).